A 458-amino-acid polypeptide reads, in one-letter code: Protein TESPA1 (458 aa).

Ser312 carries the phosphoserine modification. Positions 328–339 (KIQQDPEHRQAL) are enriched in basic and acidic residues. 2 disordered regions span residues 328-356 (KIQQ…STSS) and 439-458 (LPTI…LTNL). Composition is skewed to polar residues over residues 346–356 (PIQNTNPSTSS) and 439–450 (LPTIQQKQNQGQ).

Interacts with PLCG1 and GRB2; the association is increased with prolonged stimulation of the TCR and may facilitate the assembly of the LAT signalosome. Interacts with ITPR1 and ITPR3. Interacts with HSPA9. In terms of processing, may be phosphorylated in response to store-operated Ca(+2) entry. As to expression, expressed in lymphoid tissues, with highest expression levels detected in thymus and lower levels in spleen and lymph nodes (at protein level). Detected in CD4(+) and CD8(+) T-cells, B-cells and mast cells. Not detected in monocytes/macrophages.

It localises to the cytoplasm. The protein localises to the endoplasmic reticulum membrane. In terms of biological role, may play a role in the regulation of inositol 1,4,5-trisphosphate receptor-mediated Ca(2+) release and mitochondrial Ca(2+) uptake via the mitochondria-associated endoplasmic reticulum membrane (MAM) compartment. Required for the development and maturation of T-cells, its function being essential for the late stages of thymocyte development. Plays a role in T-cell antigen receptor (TCR)-mediated activation of the ERK and NFAT signaling pathways, possibly by serving as a scaffolding protein that promotes the assembly of the LAT signalosome in thymocytes. This chain is Protein TESPA1 (Tespa1), found in Mus musculus (Mouse).